A 585-amino-acid chain; its full sequence is Probable multidrug resistance ABC transporter ATP-binding/permease protein YheI (585 aa).

Residues Tyr-19 to Arg-304 enclose the ABC transmembrane type-1 domain. 6 helical membrane-spanning segments follow: residues Ile-21–Gly-41, Leu-57–Phe-77, Ala-127–Met-147, Ile-149–Leu-169, Val-249–Phe-269, and Val-279–Ile-299. One can recognise an ABC transporter domain in the interval Ile-337–Arg-572. Residue Gly-371–Thr-378 participates in ATP binding.

The protein belongs to the ABC transporter superfamily. In terms of assembly, heterodimer composed of YheH and YheI.

The protein localises to the cell membrane. With respect to regulation, inhibited by ortho-vanadate. Its function is as follows. Involved in the transport of four structurally unrelated drugs, including doxorubicin and mitoxantrone. Transmembrane domains (TMD) form a pore in the membrane and the ATP-binding domain (NBD) is responsible for energy generation. The sequence is that of Probable multidrug resistance ABC transporter ATP-binding/permease protein YheI (yheI) from Bacillus subtilis (strain 168).